Here is an 883-residue protein sequence, read N- to C-terminus: Envelope glycoprotein B (883 aa).

Positions 1-31 are cleaved as a signal peptide; that stretch reads MQSYIAVNIDMASLKMLICVCVAILIPSTLS. Residues 32 to 750 are Virion surface-facing; it reads QDSHGIGWNN…SGIASFLSNP (719 aa). Disulfide bonds link Cys77-Cys535, Cys94-Cys491, Cys167-Cys229, Cys321-Cys369, and Cys558-Cys608. Asn102 and Asn121 each carry an N-linked (GlcNAc...) asparagine; by host glycan. An involved in fusion and/or binding to host membrane region spans residues 134–140; sequence TWALFSR. Asn211 carries an N-linked (GlcNAc...) asparagine; by host glycan. The involved in fusion and/or binding to host membrane stretch occupies residues 216–223; the sequence is HQTLGYRT. Residues Asn262 and Asn360 are each glycosylated (N-linked (GlcNAc...) asparagine; by host). Residues 428 to 457 are disordered; that stretch reads QNHLPRGRERRQAAGRRTASLQSGPQGDRI. Residues Asn579, Asn635, and Asn649 are each glycosylated (N-linked (GlcNAc...) asparagine; by host). Hydrophobic membrane proximal region stretches follow at residues 694–748 and 724–744; these read IDTV…SFLS and ALGTVVMTAAAAVISTVSGIA. The chain crosses the membrane as a helical span at residues 751 to 771; sequence FAALAIGIAVVVSIILGLLAF. Residues 772-883 are Intravirion-facing; it reads KYVMNLKSNP…PSWAEESEDE (112 aa). The tract at residues 791–817 is disordered; that stretch reads PPAGTPPRPSRRYYKDEEEVEEDSDED. Acidic residues predominate over residues 806–817; that stretch reads DEEEVEEDSDED. Residues 868–871 carry the Internalization motif motif; that stretch reads YPLL.

Belongs to the herpesviridae glycoprotein B family. In terms of assembly, homotrimer; disulfide-linked. Binds to heparan sulfate proteoglycans. Interacts with gH/gL heterodimer. Post-translationally, a proteolytic cleavage by host furin generates two subunits that remain linked by disulfide bonds.

It localises to the virion membrane. Its subcellular location is the host cell membrane. It is found in the host endosome membrane. The protein localises to the host Golgi apparatus membrane. In terms of biological role, envelope glycoprotein that forms spikes at the surface of virion envelope. Essential for the initial attachment to heparan sulfate moieties of the host cell surface proteoglycans. Involved in fusion of viral and cellular membranes leading to virus entry into the host cell. Following initial binding to its host receptors, membrane fusion is mediated by the fusion machinery composed at least of gB and the heterodimer gH/gL. May be involved in the fusion between the virion envelope and the outer nuclear membrane during virion egress. This is Envelope glycoprotein B from Infectious laryngotracheitis virus (strain SA-2) (ILTV).